A 126-amino-acid chain; its full sequence is Aspartate 1-decarboxylase (126 aa).

The active-site Schiff-base intermediate with substrate; via pyruvic acid is Ser25. At Ser25 the chain carries Pyruvic acid (Ser). Thr57 provides a ligand contact to substrate. Residue Tyr58 is the Proton donor of the active site. 73–75 (GGA) serves as a coordination point for substrate.

This sequence belongs to the PanD family. Heterooctamer of four alpha and four beta subunits. Requires pyruvate as cofactor. In terms of processing, is synthesized initially as an inactive proenzyme, which is activated by self-cleavage at a specific serine bond to produce a beta-subunit with a hydroxyl group at its C-terminus and an alpha-subunit with a pyruvoyl group at its N-terminus.

The protein localises to the cytoplasm. The enzyme catalyses L-aspartate + H(+) = beta-alanine + CO2. It participates in cofactor biosynthesis; (R)-pantothenate biosynthesis; beta-alanine from L-aspartate: step 1/1. Functionally, catalyzes the pyruvoyl-dependent decarboxylation of aspartate to produce beta-alanine. The sequence is that of Aspartate 1-decarboxylase from Xylella fastidiosa (strain 9a5c).